Consider the following 456-residue polypeptide: UDP-N-acetylmuramoylalanine--D-glutamate ligase (456 aa).

119–125 contacts ATP; that stretch reads GSNGKTT.

The protein belongs to the MurCDEF family.

It is found in the cytoplasm. The catalysed reaction is UDP-N-acetyl-alpha-D-muramoyl-L-alanine + D-glutamate + ATP = UDP-N-acetyl-alpha-D-muramoyl-L-alanyl-D-glutamate + ADP + phosphate + H(+). Its pathway is cell wall biogenesis; peptidoglycan biosynthesis. Functionally, cell wall formation. Catalyzes the addition of glutamate to the nucleotide precursor UDP-N-acetylmuramoyl-L-alanine (UMA). This is UDP-N-acetylmuramoylalanine--D-glutamate ligase from Limosilactobacillus reuteri (strain DSM 20016) (Lactobacillus reuteri).